Reading from the N-terminus, the 506-residue chain is Anaerobic nitric oxide reductase transcription regulator NorR (506 aa).

Asp-57 carries the 4-aspartylphosphate modification. Residues 187–416 form the Sigma-54 factor interaction domain; the sequence is MIGLSPNMMQ…LEHAIHRAVV (230 aa). ATP contacts are provided by residues 215–222 and 278–287; these read GETGTGKE and ADNGTLFLDE. A DNA-binding region (H-T-H motif) is located at residues 481-500; that stretch reads WAACARALETDVANLHRLAK.

The protein operates within nitrogen metabolism; nitric oxide reduction. In terms of biological role, required for the expression of anaerobic nitric oxide (NO) reductase, acts as a transcriptional activator for at least the norVW operon. Activation also requires sigma-54. The sequence is that of Anaerobic nitric oxide reductase transcription regulator NorR from Citrobacter koseri (strain ATCC BAA-895 / CDC 4225-83 / SGSC4696).